Consider the following 371-residue polypeptide: Methylthioribose-1-phosphate isomerase (371 aa).

Substrate-binding positions include 53–55 (RGA), R90, and Q203. D243 acts as the Proton donor in catalysis. Residue 253-254 (NK) coordinates substrate.

This sequence belongs to the eIF-2B alpha/beta/delta subunits family. MtnA subfamily.

It catalyses the reaction 5-(methylsulfanyl)-alpha-D-ribose 1-phosphate = 5-(methylsulfanyl)-D-ribulose 1-phosphate. The catalysed reaction is 5-deoxy-alpha-D-ribose 1-phosphate = 5-deoxy-D-ribulose 1-phosphate. Its pathway is amino-acid biosynthesis; L-methionine biosynthesis via salvage pathway; L-methionine from S-methyl-5-thio-alpha-D-ribose 1-phosphate: step 1/6. Catalyzes the interconversion of methylthioribose-1-phosphate (MTR-1-P) into methylthioribulose-1-phosphate (MTRu-1-P). Also catalyzes the interconversion of 5-deoxyribose 1-phosphate and 5-deoxyribulose 1-phosphate. Part of a bifunctional DHAP-shunt salvage pathway for SAM by-products. This chain is Methylthioribose-1-phosphate isomerase, found in Escherichia coli O45:K1 (strain S88 / ExPEC).